The sequence spans 495 residues: UDP-glycosyltransferase 1 (495 aa).

Histidine 24 (proton acceptor) is an active-site residue. Histidine 24 is a binding site for an anthocyanidin. Catalysis depends on aspartate 129, which acts as the Charge relay. Residues glutamine 358, histidine 373, tryptophan 376, asparagine 377, serine 378, and glutamate 381 each contribute to the UDP-alpha-D-glucose site. Residue glycine 396 participates in an anthocyanidin binding. UDP-alpha-D-glucose-binding residues include aspartate 397 and glutamine 398.

Belongs to the UDP-glycosyltransferase family.

It carries out the reaction oleanolate + UDP-alpha-D-glucose = oleanolate 3-O-beta-D-glucoside + UDP + H(+). Its function is as follows. Catalyzes the transfer of a glucose (Glc) moiety from UDP-Glc to the C-3 position of the oleanane sapogenins oleanolate and hederagenin. The monoglucosylated hederagenin 3-O-beta-D-glucoside is a feeding deterrent of the yellow-striped flea beetle (Phyllotreta nemorum). The sequence is that of UDP-glycosyltransferase 1 from Barbarea vulgaris (Yellow rocket).